Here is a 467-residue protein sequence, read N- to C-terminus: Argininosuccinate lyase (467 aa).

The protein belongs to the lyase 1 family. Argininosuccinate lyase subfamily.

Its subcellular location is the cytoplasm. The enzyme catalyses 2-(N(omega)-L-arginino)succinate = fumarate + L-arginine. Its pathway is amino-acid biosynthesis; L-arginine biosynthesis; L-arginine from L-ornithine and carbamoyl phosphate: step 3/3. This chain is Argininosuccinate lyase, found in Nitrosococcus oceani (strain ATCC 19707 / BCRC 17464 / JCM 30415 / NCIMB 11848 / C-107).